Consider the following 88-residue polypeptide: Small ribosomal subunit protein uS15 (88 aa).

It belongs to the universal ribosomal protein uS15 family. In terms of assembly, part of the 30S ribosomal subunit. Forms a bridge to the 50S subunit in the 70S ribosome, contacting the 23S rRNA.

Functionally, one of the primary rRNA binding proteins, it binds directly to 16S rRNA where it helps nucleate assembly of the platform of the 30S subunit by binding and bridging several RNA helices of the 16S rRNA. Forms an intersubunit bridge (bridge B4) with the 23S rRNA of the 50S subunit in the ribosome. The sequence is that of Small ribosomal subunit protein uS15 from Sorangium cellulosum (strain So ce56) (Polyangium cellulosum (strain So ce56)).